The following is a 467-amino-acid chain: Probable Xaa-Pro aminopeptidase pepP (467 aa).

Mn(2+) contacts are provided by D264, D275, E398, and E438.

It belongs to the peptidase M24B family. It depends on Mn(2+) as a cofactor.

The enzyme catalyses Release of any N-terminal amino acid, including proline, that is linked to proline, even from a dipeptide or tripeptide.. Its function is as follows. Catalyzes the removal of a penultimate prolyl residue from the N-termini of peptides. This chain is Probable Xaa-Pro aminopeptidase pepP (pepP), found in Neosartorya fischeri (strain ATCC 1020 / DSM 3700 / CBS 544.65 / FGSC A1164 / JCM 1740 / NRRL 181 / WB 181) (Aspergillus fischerianus).